Consider the following 104-residue polypeptide: Large ribosomal subunit protein uL24 (104 aa).

The protein belongs to the universal ribosomal protein uL24 family. Part of the 50S ribosomal subunit.

Its function is as follows. One of two assembly initiator proteins, it binds directly to the 5'-end of the 23S rRNA, where it nucleates assembly of the 50S subunit. One of the proteins that surrounds the polypeptide exit tunnel on the outside of the subunit. This Chromobacterium violaceum (strain ATCC 12472 / DSM 30191 / JCM 1249 / CCUG 213 / NBRC 12614 / NCIMB 9131 / NCTC 9757 / MK) protein is Large ribosomal subunit protein uL24.